The following is a 1342-amino-acid chain: DNA-directed RNA polymerase subunit beta (1342 aa).

It belongs to the RNA polymerase beta chain family. The RNAP catalytic core consists of 2 alpha, 1 beta, 1 beta' and 1 omega subunit. When a sigma factor is associated with the core the holoenzyme is formed, which can initiate transcription.

The enzyme catalyses RNA(n) + a ribonucleoside 5'-triphosphate = RNA(n+1) + diphosphate. Its function is as follows. DNA-dependent RNA polymerase catalyzes the transcription of DNA into RNA using the four ribonucleoside triphosphates as substrates. This is DNA-directed RNA polymerase subunit beta from Proteus mirabilis (strain HI4320).